A 348-amino-acid chain; its full sequence is Serpentine receptor class beta-7 (348 aa).

A run of 7 helical transmembrane segments spans residues 31–51, 63–83, 107–127, 145–165, 191–211, 241–261, and 280–300; these read QLIMLFSSLFPLTYFILFQLL, LVGYFGAILVFSVVFLVEAFI, GNLLGCLLMTIPTFFPISITF, FLGPILAIFLVLLDLFLILLI, MFFIMMLILNSFNFFFSFLLL, ISVIFVHVTFFGSYTTITILL, and GAFMTMISSYNFAVGVASVYF.

It belongs to the nematode receptor-like protein srb family.

It localises to the membrane. The chain is Serpentine receptor class beta-7 (srb-7) from Caenorhabditis elegans.